We begin with the raw amino-acid sequence, 97 residues long: MKWATLFMVSCVLMFFVMNNINEVESIHVEQAGVCEFTGEFPGKCGNNGRKMCVEAMNKKNKGSPGENKKNLRCECFDNPVVILGRPKRICRCRNNC.

The signal sequence occupies residues 1–26 (MKWATLFMVSCVLMFFVMNNINEVES). Cystine bridges form between cysteine 35–cysteine 97, cysteine 45–cysteine 76, cysteine 53–cysteine 91, and cysteine 74–cysteine 93.

The protein belongs to the DEFL family.

The protein localises to the secreted. The protein is Putative defensin-like protein 227 (SCRL28) of Arabidopsis thaliana (Mouse-ear cress).